The sequence spans 341 residues: Mitochondrial dimethyladenosine transferase 1 (341 aa).

The transit peptide at 1–27 directs the protein to the mitochondrion; the sequence is MASSRTLGTFRLPPLPTIREIIKLFRL. The S-adenosyl-L-methionine site is built by Leu-38, Gly-63, Glu-85, Lys-86, Asp-111, Val-112, and Asn-141.

It belongs to the class I-like SAM-binding methyltransferase superfamily. rRNA adenine N(6)-methyltransferase family. KsgA subfamily. In terms of assembly, interacts with mitochondrial RNA polymerase POLRMT. Interacts with TFAM. Bound to the maturing mtSSU until the late stages of assembly.

The protein resides in the mitochondrion. It carries out the reaction adenosine(N)/adenosine(N+1) in rRNA + 4 S-adenosyl-L-methionine = N(6)-dimethyladenosine(N)/N(6)-dimethyladenosine(N+1) in rRNA + 4 S-adenosyl-L-homocysteine + 4 H(+). Mitochondrial methyltransferase which uses S-adenosyl methionine to dimethylate two highly conserved adjacent adenosine residues (A1583 and A1584) within the loop of helix 45 at the 3-prime end of 12S rRNA, thereby regulating the assembly or stability of the small subunit of the mitochondrial ribosome. Also required for basal transcription of mitochondrial DNA, probably via its interaction with POLRMT and TFAM. Stimulates transcription independently of the methyltransferase activity. The sequence is that of Mitochondrial dimethyladenosine transferase 1 (TFB1M) from Bos taurus (Bovine).